A 323-amino-acid chain; its full sequence is Ankyrin repeat and SOCS box protein 11 (323 aa).

6 ANK repeats span residues 64-93 (ADRSPLHEAAAQGRLLALKTLIAQGVNVNL), 97-126 (NRVSSLHEACLGGHVACAKALLENGAHVNG), 130-159 (HGATPLFNACCSGSAACVNVLLEFGAKAQL), 162-191 (HLASPIHEAVKRGNRECMEILLANNVNIDQ), 195-224 (HLGTPLYAACTYQRLDCVKKLLELGANVNH), and 227-256 (WLDTPLHAAAKQNSVEIIHLLIDYGANLKC). The SOCS box domain maps to 273-323 (SVEQALLLREGPPALSQLCRLCVRKCLGRNCHKTIHKLYLPDPLEKFLLYQ).

This sequence belongs to the ankyrin SOCS box (ASB) family. As to quaternary structure, substrate-recognition component of the ECS(ASB11) complex, composed of ASB11, CUL5, ELOB, ELOC and RNF7/RBX2.

The protein resides in the endoplasmic reticulum. It functions in the pathway protein modification; protein ubiquitination. In terms of biological role, substrate-recognition component of a cullin-5-RING E3 ubiquitin-protein ligase complex (ECS complex, also named CRL5 complex), which mediates the ubiquitination and subsequent proteasomal degradation of target proteins, such as BIK, DIRAS2 and RPN1. The ECS(ASB11) complex acts as a regulator of the endoplasmic reticulum unfolded protein response by mediating ubiquitination and degradation of BIK. The polypeptide is Ankyrin repeat and SOCS box protein 11 (ASB11) (Bos taurus (Bovine)).